Reading from the N-terminus, the 325-residue chain is Tagatose 1,6-diphosphate aldolase 1 (325 aa).

It belongs to the aldolase LacD family.

It catalyses the reaction D-tagatofuranose 1,6-bisphosphate = D-glyceraldehyde 3-phosphate + dihydroxyacetone phosphate. The protein operates within carbohydrate metabolism; D-tagatose 6-phosphate degradation; D-glyceraldehyde 3-phosphate and glycerone phosphate from D-tagatose 6-phosphate: step 2/2. This Streptococcus pyogenes serotype M3 (strain SSI-1) protein is Tagatose 1,6-diphosphate aldolase 1 (lacD1).